The sequence spans 66 residues: Large ribosomal subunit protein bL35c (66 aa).

Belongs to the bacterial ribosomal protein bL35 family.

Its subcellular location is the plastid. It localises to the chloroplast. The sequence is that of Large ribosomal subunit protein bL35c from Guillardia theta (Cryptophyte).